The primary structure comprises 103 residues: Small ribosomal subunit protein uS10 (103 aa).

It belongs to the universal ribosomal protein uS10 family. As to quaternary structure, part of the 30S ribosomal subunit.

Its function is as follows. Involved in the binding of tRNA to the ribosomes. The protein is Small ribosomal subunit protein uS10 of Neisseria gonorrhoeae.